Consider the following 132-residue polypeptide: MPKTYPEELAEWVKGREAKKPRQDKHVVAFLAVKSDVQAALDAGYAMKTIWEHMKETGRLRCRYETFTQHVKRYIKAAPVASPPPPATPPDSQPKGAKPEPKAAPPASESKSEPPKIGGFTFDATPKKEDLL.

Positions 76–132 are disordered; the sequence is KAAPVASPPPPATPPDSQPKGAKPEPKAAPPASESKSEPPKIGGFTFDATPKKEDLL. Residues 81–92 are compositionally biased toward pro residues; it reads ASPPPPATPPDS.

This chain is Protein TraK (traK), found in Escherichia coli.